A 336-amino-acid polypeptide reads, in one-letter code: Ornithine carbamoyltransferase, catabolic (336 aa).

Carbamoyl phosphate contacts are provided by residues 57–60 (STRT), glutamine 84, arginine 108, and 135–138 (HPTQ). L-ornithine is bound by residues asparagine 168, aspartate 232, and 236-237 (SM). Residues 274–275 (CL) and arginine 321 contribute to the carbamoyl phosphate site.

The protein belongs to the aspartate/ornithine carbamoyltransferase superfamily. OTCase family.

The protein resides in the cytoplasm. The catalysed reaction is carbamoyl phosphate + L-ornithine = L-citrulline + phosphate + H(+). Its pathway is amino-acid degradation; L-arginine degradation via ADI pathway; carbamoyl phosphate from L-arginine: step 2/2. In terms of biological role, reversibly catalyzes the transfer of the carbamoyl group from carbamoyl phosphate (CP) to the N(epsilon) atom of ornithine (ORN) to produce L-citrulline. This Pseudomonas putida (strain ATCC 47054 / DSM 6125 / CFBP 8728 / NCIMB 11950 / KT2440) protein is Ornithine carbamoyltransferase, catabolic (arcB).